The following is a 341-amino-acid chain: MEPAFGEVNQLGGVFVNGRPLPNAIRLRIVELAQLGIRPCDISRQLRVSHGCVSKILARYNETGSILPGAIGGSKPRVTTPTVVKHIRTYKQRDPGIFAWEIRDRLLADGVCDKYNVPSVSSISRILRNKIGNLAQQGHYDSYKQHQPAPQPALPYNHIYSYPSPITAAAAKVPTPPGVPAIPGSVAMPRTWPSSHSVTDILGIRSITDQVSDSSPYHSPKVEEWSSLGRNNFPAAAPHAVNGLEKGALEQEAKYGQAPNGLPAVSSFVSASSMAPYPTPAQVSPYMTYSAAPSGYVAGHGWQHAGGTPLSPHNCDIPASLAFKGMQAAREGSHSVTASAL.

The paired DNA-binding region spans 4-130; it reads AFGEVNQLGG…SSISRILRNK (127 aa). Positions 7 to 63 are PAI subdomain; the sequence is EVNQLGGVFVNGRPLPNAIRLRIVELAQLGIRPCDISRQLRVSHGCVSKILARYNET. Positions 82–130 are RED subdomain; that stretch reads TVVKHIRTYKQRDPGIFAWEIRDRLLADGVCDKYNVPSVSSISRILRNK. Positions 168–189 are interaction with KDM5B; it reads AAAAKVPTPPGVPAIPGSVAMP.

Interacts with KDM5B.

It localises to the nucleus. Transcription factor required for normal development of thymus, parathyroid glands, ultimobranchial bodies, teeth, skeletal elements of skull and larynx as well as distal limbs. This chain is Paired box protein Pax-9 (PAX9), found in Daubentonia madagascariensis (Aye-aye).